Here is a 356-residue protein sequence, read N- to C-terminus: Ornithine cyclodeaminase (356 aa).

Residues arginine 53 and lysine 77 each contribute to the L-ornithine site. NAD(+) contacts are provided by residues threonine 92, arginine 120, 147 to 148, aspartate 169, threonine 209, 232 to 235, lysine 239, and serine 300; these read AQ and VGGD. Arginine 120 serves as a coordination point for L-ornithine. Aspartate 235 is a binding site for L-ornithine. Aspartate 235 (proton donor/acceptor) is an active-site residue. L-ornithine is bound at residue valine 301.

Belongs to the ornithine cyclodeaminase/mu-crystallin family. NAD(+) is required as a cofactor.

It carries out the reaction L-ornithine = L-proline + NH4(+). The protein operates within amino-acid biosynthesis; L-proline biosynthesis; L-proline from L-ornithine: step 1/1. Is inhibited by L-proline and L-lysine. Is not activated by small concentrations of L-arginine, and is even inhibited by about 50% at 0.5 mM L-arginine. In terms of biological role, catalyzes the conversion of L-ornithine into L-proline with release of ammonia. Is involved in the utilization of octopine, a catabolic pathway that proceeds through L-arginine and L-ornithine to L-proline. Octopine is a predominant opine in plant cells transformed with Ti plasmid pTiAch5. This Agrobacterium tumefaciens (strain Ach5) protein is Ornithine cyclodeaminase.